The primary structure comprises 214 residues: Methyltransferase HEMK2 (214 aa).

Positions 29, 51, 53, 77, 103, 104, and 122 each coordinate S-adenosyl-L-homocysteine. Residues T29, E51, G53, D77, D103, L104, and N122 each coordinate S-adenosyl-L-methionine. A protein is bound at residue N122.

The protein belongs to the eukaryotic/archaeal PrmC-related family. Heterodimer; heterodimerization with TRMT112 is required for S-adenosyl-L-methionine-binding. As to quaternary structure, does not interact with TRMT112. Post-translationally, ubiquitinated, leading to its degradation by the proteasome. Widely expressed, with highest expression in parathyroid and pituitary glands, followed by adrenal gland and kidney, and lowest expression in leukocytes and mammary gland.

Its subcellular location is the nucleus. It carries out the reaction L-lysyl-[histone] + S-adenosyl-L-methionine = N(6)-methyl-L-lysyl-[histone] + S-adenosyl-L-homocysteine + H(+). It catalyses the reaction L-glutaminyl-[protein] + S-adenosyl-L-methionine = N(5)-methyl-L-glutaminyl-[protein] + S-adenosyl-L-homocysteine + H(+). The enzyme catalyses methylarsonous acid + S-adenosyl-L-methionine = dimethylarsinate + S-adenosyl-L-homocysteine + 2 H(+). Methyltransferase that can methylate proteins and, to a lower extent, arsenic. Catalytic subunit of a heterodimer with TRMT112, which monomethylates 'Lys-12' of histone H4 (H4K12me1), a modification present at the promoters of numerous genes encoding cell cycle regulators. Catalytic subunit of a heterodimer with TRMT112, which catalyzes N5-methylation of Glu residue of proteins with a Gly-Gln-Xaa-Xaa-Xaa-Arg motif. Methylates ETF1 on 'Gln-185'; ETF1 needs to be complexed to ERF3 in its GTP-bound form to be efficiently methylated. May also play a role in the modulation of arsenic-induced toxicity by mediating the conversion of monomethylarsonous acid (3+) into the less toxic dimethylarsonic acid. It however only plays a limited role in arsenic metabolism compared with AS3MT. The chain is Methyltransferase HEMK2 from Homo sapiens (Human).